Reading from the N-terminus, the 72-residue chain is MAKEDCIEMQGTILETLPNTMFRVELENGHVVTAHISGKMRKNYIRILTGDKVTIEMTPYDLNKGRIIFRSR.

Residues 2–72 (AKEDCIEMQG…NKGRIIFRSR (71 aa)) form the S1-like domain.

Belongs to the IF-1 family. As to quaternary structure, component of the 30S ribosomal translation pre-initiation complex which assembles on the 30S ribosome in the order IF-2 and IF-3, IF-1 and N-formylmethionyl-tRNA(fMet); mRNA recruitment can occur at any time during PIC assembly.

The protein resides in the cytoplasm. In terms of biological role, one of the essential components for the initiation of protein synthesis. Stabilizes the binding of IF-2 and IF-3 on the 30S subunit to which N-formylmethionyl-tRNA(fMet) subsequently binds. Helps modulate mRNA selection, yielding the 30S pre-initiation complex (PIC). Upon addition of the 50S ribosomal subunit IF-1, IF-2 and IF-3 are released leaving the mature 70S translation initiation complex. This Pasteurella multocida (strain Pm70) protein is Translation initiation factor IF-1.